The primary structure comprises 242 residues: Ubiquitin-conjugating enzyme E2 6 (242 aa).

The Cytoplasmic segment spans residues 1 to 220 (MASRQSQKRL…HSTPSFGVQR (220 aa)). The region spanning 5–156 (QSQKRLTKEY…NQRFTKQFPD (152 aa)) is the UBC core domain. Cys87 functions as the Glycyl thioester intermediate in the catalytic mechanism. The tract at residues 170–190 (AREQAAATTDSTDPEKPFDVR) is disordered. Residues 221-240 (FTLVGVVVAAFIAAYFNFFS) form a helical membrane-spanning segment.

It belongs to the ubiquitin-conjugating enzyme family.

The protein resides in the endoplasmic reticulum membrane. The catalysed reaction is S-ubiquitinyl-[E1 ubiquitin-activating enzyme]-L-cysteine + [E2 ubiquitin-conjugating enzyme]-L-cysteine = [E1 ubiquitin-activating enzyme]-L-cysteine + S-ubiquitinyl-[E2 ubiquitin-conjugating enzyme]-L-cysteine.. Its pathway is protein modification; protein ubiquitination. In terms of biological role, catalyzes the covalent attachment of ubiquitin to other proteins. Functions in degradation of misfolded or regulated proteins localized in the endoplasmic reticulum (ER) lumen or membrane via the ubiquitin-proteasome system. Cognate E2 conjugating enzyme for the DOA10 ubiquitin ligase complex, which is part of the ERAD-C pathway responsible for the rapid degradation of membrane proteins with misfolded cytoplasmic domains. The protein is Ubiquitin-conjugating enzyme E2 6 (UBC6) of Debaryomyces hansenii (strain ATCC 36239 / CBS 767 / BCRC 21394 / JCM 1990 / NBRC 0083 / IGC 2968) (Yeast).